A 390-amino-acid chain; its full sequence is Lipoyl synthase, mitochondrial (390 aa).

The transit peptide at 1–18 directs the protein to the mitochondrion; that stretch reads MALYRAPKLQRSLLNRCL. Residues Cys-99, Cys-104, Cys-110, Cys-137, Cys-141, Cys-144, and Ser-351 each coordinate [4Fe-4S] cluster. The 221-residue stretch at 120–340 folds into the Radical SAM core domain; it reads AEGRSAATAT…KQVAEDLGFL (221 aa).

Belongs to the radical SAM superfamily. Lipoyl synthase family. It depends on [4Fe-4S] cluster as a cofactor.

The protein resides in the mitochondrion. It carries out the reaction [[Fe-S] cluster scaffold protein carrying a second [4Fe-4S](2+) cluster] + N(6)-octanoyl-L-lysyl-[protein] + 2 oxidized [2Fe-2S]-[ferredoxin] + 2 S-adenosyl-L-methionine + 4 H(+) = [[Fe-S] cluster scaffold protein] + N(6)-[(R)-dihydrolipoyl]-L-lysyl-[protein] + 4 Fe(3+) + 2 hydrogen sulfide + 2 5'-deoxyadenosine + 2 L-methionine + 2 reduced [2Fe-2S]-[ferredoxin]. It functions in the pathway protein modification; protein lipoylation via endogenous pathway; protein N(6)-(lipoyl)lysine from octanoyl-[acyl-carrier-protein]: step 2/2. Its function is as follows. Catalyzes the radical-mediated insertion of two sulfur atoms into the C-6 and C-8 positions of the octanoyl moiety bound to the lipoyl domains of lipoate-dependent enzymes, thereby converting the octanoylated domains into lipoylated derivatives. In Coprinopsis cinerea (strain Okayama-7 / 130 / ATCC MYA-4618 / FGSC 9003) (Inky cap fungus), this protein is Lipoyl synthase, mitochondrial.